The sequence spans 230 residues: Antiholin-like protein LrgB (230 aa).

Helical transmembrane passes span 5–25 (MTPY…TLLF), 30–50 (GFFL…FLKV), 61–81 (GGKM…IPLY), 92–112 (WQIL…VFIV), 149–169 (ITSF…ALFL), 177–197 (PIAK…AVGI), and 209–229 (IAVT…MPFI).

The protein belongs to the CidB/LrgB family. LrgB subfamily.

The protein localises to the cell membrane. Its function is as follows. Inhibits the expression or activity of extracellular murein hydrolases by interacting, possibly with LrgA, with the holin-like protein CidA. The LrgAB and CidA proteins may affect the proton motive force of the membrane. May be involved in programmed cell death (PCD), possibly triggering PCD in response to antibiotics and environmental stresses. The protein is Antiholin-like protein LrgB of Bacillus cereus (strain Q1).